We begin with the raw amino-acid sequence, 144 residues long: D-aminoacyl-tRNA deacylase (144 aa).

Positions 136-137 (GP) match the Gly-cisPro motif, important for rejection of L-amino acids motif.

Belongs to the DTD family. In terms of assembly, homodimer.

Its subcellular location is the cytoplasm. It catalyses the reaction glycyl-tRNA(Ala) + H2O = tRNA(Ala) + glycine + H(+). The enzyme catalyses a D-aminoacyl-tRNA + H2O = a tRNA + a D-alpha-amino acid + H(+). Its function is as follows. An aminoacyl-tRNA editing enzyme that deacylates mischarged D-aminoacyl-tRNAs. Also deacylates mischarged glycyl-tRNA(Ala), protecting cells against glycine mischarging by AlaRS. Acts via tRNA-based rather than protein-based catalysis; rejects L-amino acids rather than detecting D-amino acids in the active site. By recycling D-aminoacyl-tRNA to D-amino acids and free tRNA molecules, this enzyme counteracts the toxicity associated with the formation of D-aminoacyl-tRNA entities in vivo and helps enforce protein L-homochirality. This is D-aminoacyl-tRNA deacylase from Mannheimia succiniciproducens (strain KCTC 0769BP / MBEL55E).